Here is a 318-residue protein sequence, read N- to C-terminus: tRNA methyltransferase 10 homolog B (318 aa).

Residues 1 to 10 (MDCKSEESAQ) are compositionally biased toward basic and acidic residues. Residues 1 to 105 (MDCKSEESAQ…DPGNGTCPQH (105 aa)) are disordered. Polar residues predominate over residues 52–63 (SPANSAVWSSKN). Positions 64 to 83 (MQRKQRHWERIVSSKKSKRK) are enriched in basic residues. A coiled-coil region spans residues 72–93 (ERIVSSKKSKRKQERERRKAKR). A compositionally biased stretch (basic and acidic residues) spans 84–96 (QERERRKAKRAED). Positions 114 to 311 (TKEKLLEAKH…KGVSPGKGYV (198 aa)) constitute an SAM-dependent MTase TRM10-type domain.

The protein belongs to the class IV-like SAM-binding methyltransferase superfamily. TRM10 family.

The catalysed reaction is guanosine(9) in tRNA + S-adenosyl-L-methionine = N(1)-methylguanosine(9) in tRNA + S-adenosyl-L-homocysteine + H(+). Functionally, S-adenosyl-L-methionine-dependent guanine N(1)-methyltransferase that catalyzes the formation of N(1)-methylguanine at position 9 (m1G9) in tRNAs. Probably not able to catalyze formation of N(1)-methyladenine at position 9 (m1A9) in tRNAs. This Mus musculus (Mouse) protein is tRNA methyltransferase 10 homolog B (Trmt10b).